The following is a 360-amino-acid chain: Geranylgeranyl pyrophosphate synthase 12, chloroplastic (360 aa).

The N-terminal 39 residues, Met-1–Ser-39, are a transit peptide targeting the chloroplast. Residues Lys-106, Arg-109, and His-138 each contribute to the isopentenyl diphosphate site. Positions 145 and 151 each coordinate Mg(2+). Position 156 (Arg-156) interacts with dimethylallyl diphosphate. An isopentenyl diphosphate-binding site is contributed by Arg-157. Lys-245, Thr-246, Gln-283, Lys-300, and Lys-310 together coordinate dimethylallyl diphosphate.

The protein belongs to the FPP/GGPP synthase family. In terms of assembly, monomer. Requires Mg(2+) as cofactor.

The protein localises to the plastid. It localises to the chloroplast. The enzyme catalyses isopentenyl diphosphate + dimethylallyl diphosphate = (2E)-geranyl diphosphate + diphosphate. It carries out the reaction isopentenyl diphosphate + (2E)-geranyl diphosphate = (2E,6E)-farnesyl diphosphate + diphosphate. The catalysed reaction is isopentenyl diphosphate + (2E,6E)-farnesyl diphosphate = (2E,6E,10E)-geranylgeranyl diphosphate + diphosphate. It participates in isoprenoid biosynthesis; farnesyl diphosphate biosynthesis; farnesyl diphosphate from geranyl diphosphate and isopentenyl diphosphate: step 1/1. Its pathway is isoprenoid biosynthesis; geranyl diphosphate biosynthesis; geranyl diphosphate from dimethylallyl diphosphate and isopentenyl diphosphate: step 1/1. The protein operates within isoprenoid biosynthesis; geranylgeranyl diphosphate biosynthesis; geranylgeranyl diphosphate from farnesyl diphosphate and isopentenyl diphosphate: step 1/1. Functionally, catalyzes the trans-addition of the three molecules of IPP onto DMAPP to form geranylgeranyl pyrophosphate. The polypeptide is Geranylgeranyl pyrophosphate synthase 12, chloroplastic (Arabidopsis thaliana (Mouse-ear cress)).